Here is a 187-residue protein sequence, read N- to C-terminus: MASTADFKNGLVLQIDGQLWQIVEFQHVKPGKGPAFVRTKLKNVVSGKVVDKTYNAGVKVETATVDRRDATYLYRDGSDFVFMDSEDFEQHPLPESLVGRLADFLLESMPVQIAFHDGTPLYLELPVSVELEVTHTEPGLQGDRSSAGTKPATVETGAEIQVPLFINTGDRLKVDTRDGSYLGRVNA.

Belongs to the elongation factor P family.

It localises to the cytoplasm. It functions in the pathway protein biosynthesis; polypeptide chain elongation. Functionally, involved in peptide bond synthesis. Stimulates efficient translation and peptide-bond synthesis on native or reconstituted 70S ribosomes in vitro. Probably functions indirectly by altering the affinity of the ribosome for aminoacyl-tRNA, thus increasing their reactivity as acceptors for peptidyl transferase. This is Elongation factor P from Mycolicibacterium smegmatis (strain ATCC 700084 / mc(2)155) (Mycobacterium smegmatis).